The primary structure comprises 435 residues: MSTGFFGDIQKVRYEGPESDNLLAFRHYNADEIVLGKRMQDHLRFAVAYWHSFAWEGGDPFGGRTFDRPWFSNEIDAAKLKADVAFEFFSLLGAPYYCFHDADVRPEGRNFAENTRYLNEIVDIFEKKQAETGMKLLWGTANLFSNRRYMAGAATNPDPDVFAFAAATVKTCIDATKRLGGENYVLWGGREGYETLLNTDLSRELDHMGRFLSLVVEYKHKIGFKGTILIEPKPQEPTKHQYDYDVATVYGFLKRYGLENEVKVNIEQGHAILAGHSFEHELALARTLGIFGSIDMNRNDYQSGWDTDQFPNNVPEKALAYYQVLLAGGFTTGGTNFDAKLRRQSLDPQDLLIGHIGGMDCCARGLKAAARMLEDGALSKPLDERYAGWNGEFGKRLLSGLSLDQIAGEVEAKDINPQPKSGRQEYLENIVNRYV.

Catalysis depends on residues H100 and D103. E231, E267, H270, D295, D306, D308, and D338 together coordinate Mg(2+).

It belongs to the xylose isomerase family. Homotetramer. It depends on Mg(2+) as a cofactor.

The protein resides in the cytoplasm. The catalysed reaction is alpha-D-xylose = alpha-D-xylulofuranose. This chain is Xylose isomerase, found in Brucella suis (strain ATCC 23445 / NCTC 10510).